The primary structure comprises 67 residues: Surface composition regulator (67 aa).

It belongs to the GlgS family.

Its function is as follows. Major determinant of cell surface composition. Negatively regulates motility, adhesion and synthesis of biofilm exopolysaccharides. The sequence is that of Surface composition regulator from Salmonella paratyphi A (strain ATCC 9150 / SARB42).